Here is a 100-residue protein sequence, read N- to C-terminus: UPF0251 protein VVA1436 (100 aa).

The protein belongs to the UPF0251 family.

The protein is UPF0251 protein VVA1436 of Vibrio vulnificus (strain YJ016).